The sequence spans 816 residues: Phosphatidylinositol 4-kinase beta (816 aa).

Disordered regions lie at residues 1–30 (MGDT…GSLL), 99–120 (EEED…RRRR), and 248–318 (AHRK…SFSS). The residue at position 2 (G2) is an N-acetylglycine. The tract at residues 2-68 (GDTVVEPAPL…VKLLHGGVAV (67 aa)) is interaction with ACBD3. The region spanning 52–242 (CQDVLEKVKL…GTKLRKLILS (191 aa)) is the PIK helical domain. S258 carries the phosphoserine modification. At T263 the chain carries Phosphothreonine. A phosphoserine mark is found at S266, S275, S277, S284, and S294. Polar residues-rich tracts occupy residues 278–297 (DATA…SNPK) and 306–318 (SSST…SFSS). Residue S428 is modified to Phosphoserine. A Phosphothreonine modification is found at T438. Position 511 is a phosphoserine (S511). Residues T517 and T519 each carry the phosphothreonine modification. The 267-residue stretch at 535–801 (EPWQEKVRRI…MVDGSMRSIT (267 aa)) folds into the PI3K/PI4K catalytic domain. The G-loop stretch occupies residues 541 to 547 (VRRIREG). Residues 668-676 (QVKDRHNGN) form a catalytic loop region. The activation loop stretch occupies residues 687–711 (HIDFGFILSSSPRNLGFETSAFKLT).

The protein belongs to the PI3/PI4-kinase family. Type III PI4K subfamily. Interacts with ARF1 and ARF3 in the Golgi complex, but not with ARF4, ARF5 or ARF6. Interacts with NCS1/FREQ in a calcium-independent manner. Interacts with CALN1/CABP8 and CALN2/CABP7; in a calcium-dependent manner; this interaction competes with NCS1/FREQ binding. Interacts with ACBD3. Interacts with ARMH3, YWHAB, YWHAE, YWHAG, YWHAH, YWHAQ, YWHAZ and SFN. Interacts with GGA2 (via VHS domain); the interaction is important for PI4KB location at the Golgi apparatus membrane. Interacts with ATG9A. The cofactor is Mg(2+). Mn(2+) is required as a cofactor.

The protein localises to the endomembrane system. Its subcellular location is the mitochondrion outer membrane. It is found in the rough endoplasmic reticulum membrane. It localises to the golgi apparatus. The protein resides in the golgi apparatus membrane. The catalysed reaction is a 1,2-diacyl-sn-glycero-3-phospho-(1D-myo-inositol) + ATP = a 1,2-diacyl-sn-glycero-3-phospho-(1D-myo-inositol 4-phosphate) + ADP + H(+). Inhibited by wortmannin. Increased kinase activity upon interaction with NCS1/FREQ. In terms of biological role, phosphorylates phosphatidylinositol (PI) in the first committed step in the production of the second messenger inositol-1,4,5,-trisphosphate (PIP). May regulate Golgi disintegration/reorganization during mitosis, possibly via its phosphorylation. Involved in Golgi-to-plasma membrane trafficking. The chain is Phosphatidylinositol 4-kinase beta (PI4KB) from Callithrix jacchus (White-tufted-ear marmoset).